Here is a 208-residue protein sequence, read N- to C-terminus: Cytidylate kinase (208 aa).

Position 7–15 (G7–T15) interacts with ATP.

The protein belongs to the cytidylate kinase family. Type 1 subfamily.

The protein resides in the cytoplasm. The enzyme catalyses CMP + ATP = CDP + ADP. The catalysed reaction is dCMP + ATP = dCDP + ADP. In Xanthobacter autotrophicus (strain ATCC BAA-1158 / Py2), this protein is Cytidylate kinase.